Consider the following 310-residue polypeptide: Olfactory receptor 7A42 (310 aa).

Residues 1 to 25 lie on the Extracellular side of the membrane; that stretch reads MESGNSTRRIPSFFLLGFSENPHLQ. An N-linked (GlcNAc...) asparagine glycan is attached at Asn-5. Residues 26–46 form a helical membrane-spanning segment; it reads FLIFVLFLSMYLVTVLGNLLI. The Cytoplasmic segment spans residues 47-67; the sequence is IMVIITQSPLHTPMYFFLANL. The helical transmembrane segment at 68–88 threads the bilayer; that stretch reads SFVDICFTSTTVPKMLVNIQT. The Extracellular segment spans residues 89–100; the sequence is QSKAITYADCIS. A disulfide bond links Cys-98 and Cys-190. Residues 101 to 121 traverse the membrane as a helical segment; that stretch reads QMSVFLVFAELDNFLLAVMAY. Residues 122–135 lie on the Cytoplasmic side of the membrane; the sequence is DRYVAICHPLYYTF. Residues 136-156 form a helical membrane-spanning segment; sequence IVNQHLCILMVLLSWVVSILH. Over 157-202 the chain is Extracellular; it reads AFLQSSIVLQLTFCGDVKIPHFFCELNQLSQLTCLDSLSSHLIMNL. The helical transmembrane segment at 203–223 threads the bilayer; that stretch reads VPVLLAVISFSSILYSYFKIV. Topologically, residues 224 to 240 are cytoplasmic; sequence SSICSISSVQGKYTAFS. Residues 241–261 traverse the membrane as a helical segment; the sequence is TCVSHLSIVFLFYSTGLGVYV. At 262–272 the chain is on the extracellular side; sequence SSAVVQSSHSA. The chain crosses the membrane as a helical span at residues 273-293; sequence ARASVMYTVVTPMLNPFIYSL. Residues 294 to 310 are Cytoplasmic-facing; sequence RNKDVKKALERLLEGKL.

Belongs to the G-protein coupled receptor 1 family.

It localises to the cell membrane. In terms of biological role, odorant receptor. The chain is Olfactory receptor 7A42 from Mus musculus (Mouse).